A 256-amino-acid chain; its full sequence is Tryptophan synthase alpha chain (256 aa).

Catalysis depends on proton acceptor residues Glu-48 and Asp-59.

Belongs to the TrpA family. Tetramer of two alpha and two beta chains.

The catalysed reaction is (1S,2R)-1-C-(indol-3-yl)glycerol 3-phosphate + L-serine = D-glyceraldehyde 3-phosphate + L-tryptophan + H2O. It participates in amino-acid biosynthesis; L-tryptophan biosynthesis; L-tryptophan from chorismate: step 5/5. The alpha subunit is responsible for the aldol cleavage of indoleglycerol phosphate to indole and glyceraldehyde 3-phosphate. This Caldicellulosiruptor bescii (strain ATCC BAA-1888 / DSM 6725 / KCTC 15123 / Z-1320) (Anaerocellum thermophilum) protein is Tryptophan synthase alpha chain.